The sequence spans 1059 residues: Disks large-associated protein 2 (1059 aa).

Disordered regions lie at residues 31–54 (GEPE…PAEE) and 245–311 (KSHS…SDST). A compositionally biased stretch (polar residues) spans 245–261 (KSHSLEGSSKSNINGTK). Over residues 262–271 (SDSRVDDHHQ) the composition is skewed to basic and acidic residues. The span at 272–285 (SHLSKHSKRSKSKE) shows a compositional bias: basic residues. Phosphoserine is present on residues Ser302, Ser308, Ser390, and Ser456. The interval 613-669 (YKKTPPPVPPRTTSKPLISVTAQSSTESTQDAYQDSRAQRMSPWPQDSRGGLYNSMD) is disordered. The segment covering 632–645 (VTAQSSTESTQDAY) has biased composition (polar residues). Phosphoserine occurs at positions 667, 670, 673, and 720. Residues 723–756 (VQDSEFPDHQPYPRSDVETATDSDTESRGLREYH) are disordered. Thr743 is subject to Phosphothreonine. A Phosphoserine modification is found at Ser745. The span at 747–756 (TESRGLREYH) shows a compositional bias: basic and acidic residues. 4 positions are modified to phosphoserine: Ser776, Ser811, Ser983, and Ser1012. The disordered stretch occupies residues 985-1025 (ERKEERKIPPPIPKKPPKGKFPITREKSLDLPDRQRQEARR). Residues 1007-1025 (ITREKSLDLPDRQRQEARR) are compositionally biased toward basic and acidic residues.

The protein belongs to the SAPAP family. Interacts with DLG4/PSD-95. In terms of tissue distribution, expressed in various brain areas.

It is found in the cell membrane. Its subcellular location is the postsynaptic density. The protein localises to the synapse. Functionally, may play a role in the molecular organization of synapses and neuronal cell signaling. Could be an adapter protein linking ion channel to the subsynaptic cytoskeleton. May induce enrichment of PSD-95/SAP90 at the plasma membrane. This is Disks large-associated protein 2 from Mus musculus (Mouse).